Reading from the N-terminus, the 213-residue chain is Ras-related protein Rab-25 (213 aa).

Residues serine 21, glycine 24, lysine 25, threonine 26, asparagine 27, serine 38, histidine 39, threonine 43, and threonine 44 each contribute to the GTP site. Mg(2+) is bound at residue threonine 26. Short sequence motifs (switch) lie at residues 35-49 (NEFSHDSRTTIGVEF) and 67-84 (DTAGLERYRAITSAYYRG). Residues threonine 44 and aspartate 67 each contribute to the Mg(2+) site. The GTP site is built by glycine 70, asparagine 125, lysine 126, aspartate 128, alanine 156, and leucine 157. 2 S-geranylgeranyl cysteine lipidation sites follow: cysteine 209 and cysteine 210. Cysteine 210 bears the Cysteine methyl ester mark. The propeptide at 211-213 (ISL) is removed in mature form.

The protein belongs to the small GTPase superfamily. Rab family. Interacts (GTP-bound form) with RAB11FIP1, RAB11FIP2, RAB11FIP3 and RAB11FIP4. Interacts (via the hypervariable C-terminal region) with ITGB1 (via the cytoplasmic region); the interaction is GTP-dependent. Interacts with ITGAV. Associates with the integrin alpha-V/beta-1 heterodimer. Interacts with VPS33B. Requires Mg(2+) as cofactor.

Its subcellular location is the cell membrane. The protein resides in the cell projection. It localises to the pseudopodium membrane. It is found in the cytoplasmic vesicle. The enzyme catalyses GTP + H2O = GDP + phosphate + H(+). Its activity is regulated as follows. Regulated by guanine nucleotide exchange factors (GEFs) which promote the exchange of bound GDP for free GTP. Regulated by GTPase activating proteins (GAPs) which increase the GTP hydrolysis activity. Inhibited by GDP dissociation inhibitors (GDIs) which prevent Rab-GDP dissociation. Its function is as follows. The small GTPases Rab are key regulators of intracellular membrane trafficking, from the formation of transport vesicles to their fusion with membranes. Rabs cycle between an inactive GDP-bound form and an active GTP-bound form that is able to recruit to membranes different set of downstream effectors directly responsible for vesicle formation, movement, tethering and fusion. RAB25 regulates epithelial cell differentiation, proliferation and survival, thereby playing key roles in tumorigenesis. Promotes invasive migration of cells in which it functions to localize and maintain integrin alpha-V/beta-1 at the tips of extending pseudopodia. Involved in the regulation of epithelial morphogenesis through the control of CLDN4 expression and localization at tight junctions. May selectively regulate the apical recycling pathway. Together with MYO5B regulates transcytosis. The polypeptide is Ras-related protein Rab-25 (Mus musculus (Mouse)).